Here is a 143-residue protein sequence, read N- to C-terminus: Oxoglutarate dehydrogenase inhibitor (143 aa).

A Phosphothreonine modification is found at Thr14. A compositionally biased stretch (low complexity) spans 29–38; it reads GAGAATASGS. Residues 29 to 50 are disordered; the sequence is GAGAATASGSDVTPPAGAGMLV. Residues 68–117 form the FHA domain; that stretch reads TTAGRHPESDIFLDDVTVSRRHAEFRRQDGSFEVVDVGSLNGTYVNREPR.

It localises to the cytoplasm. In terms of biological role, an essential component of the PknG signaling pathway. When unphosphorylated, it inhibits the activity of 2-oxoglutarate dehydrogenase. When phosphorylated it does not inhibit 2-oxoglutarate dehydrogenase. The sequence is that of Oxoglutarate dehydrogenase inhibitor (odhI) from Corynebacterium diphtheriae (strain ATCC 700971 / NCTC 13129 / Biotype gravis).